Reading from the N-terminus, the 482-residue chain is Cobyric acid synthase (482 aa).

Positions 249 to 436 (QCKIACLALS…LHGLFTSDDF (188 aa)) constitute a GATase cobBQ-type domain. Cysteine 331 functions as the Nucleophile in the catalytic mechanism. Residue histidine 428 is part of the active site.

The protein belongs to the CobB/CobQ family. CobQ subfamily.

It functions in the pathway cofactor biosynthesis; adenosylcobalamin biosynthesis. Functionally, catalyzes amidations at positions B, D, E, and G on adenosylcobyrinic A,C-diamide. NH(2) groups are provided by glutamine, and one molecule of ATP is hydrogenolyzed for each amidation. The protein is Cobyric acid synthase of Bradyrhizobium diazoefficiens (strain JCM 10833 / BCRC 13528 / IAM 13628 / NBRC 14792 / USDA 110).